The sequence spans 229 residues: 2-C-methyl-D-erythritol 4-phosphate cytidylyltransferase (229 aa).

The protein belongs to the IspD/TarI cytidylyltransferase family. IspD subfamily.

It carries out the reaction 2-C-methyl-D-erythritol 4-phosphate + CTP + H(+) = 4-CDP-2-C-methyl-D-erythritol + diphosphate. Its pathway is isoprenoid biosynthesis; isopentenyl diphosphate biosynthesis via DXP pathway; isopentenyl diphosphate from 1-deoxy-D-xylulose 5-phosphate: step 2/6. In terms of biological role, catalyzes the formation of 4-diphosphocytidyl-2-C-methyl-D-erythritol from CTP and 2-C-methyl-D-erythritol 4-phosphate (MEP). The chain is 2-C-methyl-D-erythritol 4-phosphate cytidylyltransferase from Clostridium botulinum (strain ATCC 19397 / Type A).